The following is a 139-amino-acid chain: Probable DNA-binding protein (139 aa).

The tract at residues 97–139 is disordered; that stretch reads DEPSREASPDLGAAGAELEDESAQAGAVQGPETLRSQVLRART.

This is Probable DNA-binding protein from Homo sapiens (Human).